Consider the following 394-residue polypeptide: NAD(P)H-quinone oxidoreductase subunit H (394 aa).

Belongs to the complex I 49 kDa subunit family. As to quaternary structure, NDH-1 can be composed of about 15 different subunits; different subcomplexes with different compositions have been identified which probably have different functions.

It localises to the cellular thylakoid membrane. The enzyme catalyses a plastoquinone + NADH + (n+1) H(+)(in) = a plastoquinol + NAD(+) + n H(+)(out). The catalysed reaction is a plastoquinone + NADPH + (n+1) H(+)(in) = a plastoquinol + NADP(+) + n H(+)(out). Its function is as follows. NDH-1 shuttles electrons from an unknown electron donor, via FMN and iron-sulfur (Fe-S) centers, to quinones in the respiratory and/or the photosynthetic chain. The immediate electron acceptor for the enzyme in this species is believed to be plastoquinone. Couples the redox reaction to proton translocation, and thus conserves the redox energy in a proton gradient. Cyanobacterial NDH-1 also plays a role in inorganic carbon-concentration. The chain is NAD(P)H-quinone oxidoreductase subunit H from Microcystis aeruginosa (strain NIES-843 / IAM M-2473).